Here is a 149-residue protein sequence, read N- to C-terminus: Low molecular weight protein-tyrosine-phosphatase Wzb (149 aa).

Cys9 (nucleophile) is an active-site residue. Residue Arg15 is part of the active site. Asp115 acts as the Proton donor in catalysis.

This sequence belongs to the low molecular weight phosphotyrosine protein phosphatase family.

The enzyme catalyses O-phospho-L-tyrosyl-[protein] + H2O = L-tyrosyl-[protein] + phosphate. The protein operates within glycan metabolism; exopolysaccharide biosynthesis. Dephosphorylates Wzc. Required for the extracellular polysaccharide colanic acid synthesis. Probably involved in the export of colanic acid from the cell to medium. Involved in protection of cells against contact-dependent growth inhibition (CDI). This is Low molecular weight protein-tyrosine-phosphatase Wzb (wzb) from Salmonella typhi.